The primary structure comprises 383 residues: Polyketide synthase 4 (383 aa).

Cys164 serves as the catalytic Nucleophile and monoketide coumarate intermediate.

This sequence belongs to the thiolase-like superfamily. Chalcone/stilbene synthases family. In terms of assembly, homodimer. Expressed in fruits.

It carries out the reaction 4-coumaroyl-CoA + malonyl-CoA + H2O + H(+) = 4-hydroxybenzalacetone + 2 CO2 + 2 CoA. It catalyses the reaction (E)-4-coumaroyl-CoA + 3 malonyl-CoA + 3 H(+) = 2',4,4',6'-tetrahydroxychalcone + 3 CO2 + 4 CoA. Its pathway is secondary metabolite biosynthesis; flavonoid biosynthesis. With respect to regulation, inhibited by glutathione. In terms of biological role, bifunctional polyketide synthase producing both 4-hydroxybenzalacetone and naringenin chalcone. Can use p-coumaryl-CoA and ferulyl-CoA as substrates. Catalyzes the initial key reaction step in the biosynthesis of phenylbutanoids. The sequence is that of Polyketide synthase 4 (PKS4) from Rubus idaeus (Raspberry).